Consider the following 451-residue polypeptide: UDP-N-acetylmuramoylalanine--D-glutamate ligase (451 aa).

Position 116–122 (116–122) interacts with ATP; the sequence is GTNGKTT.

Belongs to the MurCDEF family.

It localises to the cytoplasm. It carries out the reaction UDP-N-acetyl-alpha-D-muramoyl-L-alanine + D-glutamate + ATP = UDP-N-acetyl-alpha-D-muramoyl-L-alanyl-D-glutamate + ADP + phosphate + H(+). It functions in the pathway cell wall biogenesis; peptidoglycan biosynthesis. Functionally, cell wall formation. Catalyzes the addition of glutamate to the nucleotide precursor UDP-N-acetylmuramoyl-L-alanine (UMA). The sequence is that of UDP-N-acetylmuramoylalanine--D-glutamate ligase from Clostridioides difficile (strain 630) (Peptoclostridium difficile).